The primary structure comprises 248 residues: Pyridoxine 5'-phosphate synthase (248 aa).

A 3-amino-2-oxopropyl phosphate-binding site is contributed by asparagine 10. 12–13 serves as a coordination point for 1-deoxy-D-xylulose 5-phosphate; the sequence is DH. Arginine 21 lines the 3-amino-2-oxopropyl phosphate pocket. Histidine 46 acts as the Proton acceptor in catalysis. 2 residues coordinate 1-deoxy-D-xylulose 5-phosphate: arginine 48 and histidine 53. Residue glutamate 73 is the Proton acceptor of the active site. Threonine 103 provides a ligand contact to 1-deoxy-D-xylulose 5-phosphate. The active-site Proton donor is histidine 194. 3-amino-2-oxopropyl phosphate contacts are provided by residues glycine 195 and 216–217; that span reads GH.

The protein belongs to the PNP synthase family. In terms of assembly, homooctamer; tetramer of dimers.

Its subcellular location is the cytoplasm. The enzyme catalyses 3-amino-2-oxopropyl phosphate + 1-deoxy-D-xylulose 5-phosphate = pyridoxine 5'-phosphate + phosphate + 2 H2O + H(+). It participates in cofactor biosynthesis; pyridoxine 5'-phosphate biosynthesis; pyridoxine 5'-phosphate from D-erythrose 4-phosphate: step 5/5. Catalyzes the complicated ring closure reaction between the two acyclic compounds 1-deoxy-D-xylulose-5-phosphate (DXP) and 3-amino-2-oxopropyl phosphate (1-amino-acetone-3-phosphate or AAP) to form pyridoxine 5'-phosphate (PNP) and inorganic phosphate. The sequence is that of Pyridoxine 5'-phosphate synthase from Legionella pneumophila (strain Paris).